The primary structure comprises 899 residues: DNA mismatch repair protein MutS (899 aa).

The disordered stretch occupies residues 1–20; it reads MGLQKKTDPEQAQADSAASR. 631-638 lines the ATP pocket; it reads GPNMGGKS. Positions 832–852 are disordered; sequence PPTPDDDEDDFGAAPSAVPAP. Residues 843–852 are compositionally biased toward low complexity; the sequence is GAAPSAVPAP.

Belongs to the DNA mismatch repair MutS family.

Its function is as follows. This protein is involved in the repair of mismatches in DNA. It is possible that it carries out the mismatch recognition step. This protein has a weak ATPase activity. This Cupriavidus necator (strain ATCC 17699 / DSM 428 / KCTC 22496 / NCIMB 10442 / H16 / Stanier 337) (Ralstonia eutropha) protein is DNA mismatch repair protein MutS.